We begin with the raw amino-acid sequence, 370 residues long: Phospho-N-acetylmuramoyl-pentapeptide-transferase (370 aa).

Helical transmembrane passes span Pro-21–Ile-41, Leu-46–Ile-66, Pro-92–Leu-112, Phe-117–Ile-137, Leu-151–Ile-171, Ile-181–Phe-201, Asp-217–Ile-237, Asn-243–Phe-263, Val-270–Leu-290, Leu-298–Phe-318, and Thr-349–Leu-369.

This sequence belongs to the glycosyltransferase 4 family. MraY subfamily. Requires Mg(2+) as cofactor.

Its subcellular location is the cell inner membrane. The catalysed reaction is UDP-N-acetyl-alpha-D-muramoyl-L-alanyl-gamma-D-glutamyl-meso-2,6-diaminopimeloyl-D-alanyl-D-alanine + di-trans,octa-cis-undecaprenyl phosphate = di-trans,octa-cis-undecaprenyl diphospho-N-acetyl-alpha-D-muramoyl-L-alanyl-D-glutamyl-meso-2,6-diaminopimeloyl-D-alanyl-D-alanine + UMP. The protein operates within cell wall biogenesis; peptidoglycan biosynthesis. Its function is as follows. Catalyzes the initial step of the lipid cycle reactions in the biosynthesis of the cell wall peptidoglycan: transfers peptidoglycan precursor phospho-MurNAc-pentapeptide from UDP-MurNAc-pentapeptide onto the lipid carrier undecaprenyl phosphate, yielding undecaprenyl-pyrophosphoryl-MurNAc-pentapeptide, known as lipid I. This is Phospho-N-acetylmuramoyl-pentapeptide-transferase from Prochlorococcus marinus (strain SARG / CCMP1375 / SS120).